The following is a 373-amino-acid chain: 3 beta-hydroxysteroid dehydrogenase/Delta 5--&gt;4-isomerase (373 aa).

The active-site Proton acceptor is Tyr-155. Residue Lys-159 coordinates NAD(+). A helical transmembrane segment spans residues 288 to 308 (ISLEYWLAFLLEIVSFLLSPI).

This sequence belongs to the 3-beta-HSD family.

It is found in the endoplasmic reticulum membrane. The protein resides in the mitochondrion membrane. The enzyme catalyses a 3beta-hydroxy-Delta(5)-steroid + NAD(+) = a 3-oxo-Delta(5)-steroid + NADH + H(+). It catalyses the reaction a 3-oxo-Delta(5)-steroid = a 3-oxo-Delta(4)-steroid. It functions in the pathway lipid metabolism; steroid biosynthesis. Its function is as follows. 3-beta-HSD is a bifunctional enzyme, that catalyzes the oxidative conversion of Delta(5)-ene-3-beta-hydroxy steroid, and the oxidative conversion of ketosteroids. The 3-beta-HSD enzymatic system plays a crucial role in the biosynthesis of all classes of hormonal steroids. The chain is 3 beta-hydroxysteroid dehydrogenase/Delta 5--&gt;4-isomerase (HSD3B) from Canis lupus familiaris (Dog).